Here is an 87-residue protein sequence, read N- to C-terminus: MQASDRFNINSQLEHLQAKYVGTGHADLSRFEWAVNIQRDSYASYIGHYPMLSYFAIAENESIGRERYNFMQKMLLPCGLPPEREEE.

Belongs to the SF3B5 family.

This is an uncharacterized protein from Arabidopsis thaliana (Mouse-ear cress).